Consider the following 600-residue polypeptide: MTDSSPAASPSSLKIYFRLLGYVRPYISLFLISIVGFLIFASTQPMLGYILKYFVDGLSNPEAVLFPTVPYLRDLQLLQAVPLLIILIAAWQGLGSYLGNYFLAKVSLGLVHDLRVQLFNNLLVLPNRYFDKHNSGHLISRITFNVTMVTGAATDAIKVVIREGMTVIFLFASLLFMNWKLTLVMVAILPLIAVMVRTASKKFRKQSKKIQLAMGDVTHVASETIQGYRVVRSFGGEAYEEKRFLDASQGNTDKQLRMTRTGAIYTPLLQLVIYSAMAILMFLVLYLRGDASAGDMVAYITLAGLLPKPIRQLSEVSSTIQKGVAGAESIFEQLDVEPEVDTGTVERDSVSGRLDVRNLSFTYPGTERQVLDDISFSVEPGQMVALVGRSGSGKSTLANLIPRFYHHDKGEILIDGVEVEQYKLLNLRRHIAQVTQHVTLFSDTVANNIAYGDLAGAPREDIEKAARDAYAMDFIAQLPEGLDTQVGENGVLLSGGQRQRLAIARALLKNAPLLILDEATSALDTESERHIQAALDQVMKGRTTLVIAHRLSTIEKADLILVMDQGRIVERGTHDDLLAQNGYYARLNAMGLDAPAEDIA.

A run of 4 helical transmembrane segments spans residues 27 to 47, 83 to 103, 174 to 194, and 267 to 287; these read ISLF…QPML, LLII…NYFL, LLFM…LIAV, and PLLQ…VLYL. An ABC transmembrane type-1 domain is found at 31–322; sequence LISIVGFLIF…LSEVSSTIQK (292 aa). Residues 354-590 enclose the ABC transporter domain; it reads LDVRNLSFTY…NGYYARLNAM (237 aa). Position 388–395 (388–395) interacts with ATP; that stretch reads GRSGSGKS.

This sequence belongs to the ABC transporter superfamily. Lipid exporter (TC 3.A.1.106) family. Homodimer.

The protein localises to the cell inner membrane. It catalyses the reaction ATP + H2O + lipid A-core oligosaccharideSide 1 = ADP + phosphate + lipid A-core oligosaccharideSide 2.. Functionally, involved in lipopolysaccharide (LPS) biosynthesis. Translocates lipid A-core from the inner to the outer leaflet of the inner membrane. Transmembrane domains (TMD) form a pore in the inner membrane and the ATP-binding domain (NBD) is responsible for energy generation. The chain is ATP-dependent lipid A-core flippase from Pseudomonas fluorescens (strain Pf0-1).